The primary structure comprises 129 residues: Large ribosomal subunit protein eL32 (129 aa).

It belongs to the eukaryotic ribosomal protein eL32 family.

The sequence is that of Large ribosomal subunit protein eL32 (rpl32e) from Methanosarcina acetivorans (strain ATCC 35395 / DSM 2834 / JCM 12185 / C2A).